The sequence spans 138 residues: Beta-lactamase HcpB (138 aa).

TPR repeat units lie at residues M1–F28, G57–D94, and L97–D130. 4 cysteine pairs are disulfide-bonded: C22–C30, C52–C60, C88–C96, and C124–C132.

The protein belongs to the hcp beta-lactamase family.

It carries out the reaction a beta-lactam + H2O = a substituted beta-amino acid. In terms of biological role, hydrolyzes 6-aminopenicillinic acid and 7-aminocephalosporanic acid (ACA) derivatives. In Helicobacter pylori (strain ATCC 700392 / 26695) (Campylobacter pylori), this protein is Beta-lactamase HcpB (hcpB).